The chain runs to 343 residues: Glucan endo-1,3-beta-glucosidase, acidic isoform GI9 (343 aa).

The first 29 residues, 1–29, serve as a signal peptide directing secretion; that stretch reads MTLCIKNGFLAAALVLVGLLICSIQMIGA. Gln30 bears the Pyrrolidone carboxylic acid mark. Catalysis depends on Glu124, which acts as the Proton donor. Glu264 (nucleophile) is an active-site residue.

Belongs to the glycosyl hydrolase 17 family.

It is found in the secreted. The protein resides in the extracellular space. It catalyses the reaction Hydrolysis of (1-&gt;3)-beta-D-glucosidic linkages in (1-&gt;3)-beta-D-glucans.. Its function is as follows. Implicated in the defense of plants against pathogens. The chain is Glucan endo-1,3-beta-glucosidase, acidic isoform GI9 (PR2) from Nicotiana tabacum (Common tobacco).